The sequence spans 394 residues: Flap endonuclease 1 (394 aa).

Residues 1–103 form an N-domain region; sequence MGIKSLYQII…GELAKRTMRK (103 aa). D34 contributes to the Mg(2+) binding site. R69 contributes to the DNA binding site. D85 serves as a coordination point for Mg(2+). A disordered region spans residues 102 to 123; it reads RKAEAQEAAEEAKETGTAEDVE. Residues 121-252 are I-domain; sequence DVEKFSRRTV…NTALKMIRDH (132 aa). Mg(2+) contacts are provided by E157, E159, D178, and D180. E157 is a DNA binding site. DNA is bound by residues G230 and D232. D232 lines the Mg(2+) pocket. The interval 340–348 is interaction with PCNA; the sequence is QQSRLEGFF. The disordered stretch occupies residues 349 to 394; it reads KPVAKTEQQKATAKRKAEEKAELAKKKKKEDAKAKRAMGAKPRGAR. Positions 363 to 382 are enriched in basic and acidic residues; that stretch reads RKAEEKAELAKKKKKEDAKA. Positions 383–394 are enriched in basic residues; that stretch reads KRAMGAKPRGAR.

The protein belongs to the XPG/RAD2 endonuclease family. FEN1 subfamily. As to quaternary structure, interacts with PCNA. Three molecules of FEN1 bind to one PCNA trimer with each molecule binding to one PCNA monomer. PCNA stimulates the nuclease activity without altering cleavage specificity. The cofactor is Mg(2+). Phosphorylated. Phosphorylation upon DNA damage induces relocalization to the nuclear plasma.

Its subcellular location is the nucleus. The protein localises to the nucleolus. It localises to the nucleoplasm. It is found in the mitochondrion. Functionally, structure-specific nuclease with 5'-flap endonuclease and 5'-3' exonuclease activities involved in DNA replication and repair. During DNA replication, cleaves the 5'-overhanging flap structure that is generated by displacement synthesis when DNA polymerase encounters the 5'-end of a downstream Okazaki fragment. It enters the flap from the 5'-end and then tracks to cleave the flap base, leaving a nick for ligation. Also involved in the long patch base excision repair (LP-BER) pathway, by cleaving within the apurinic/apyrimidinic (AP) site-terminated flap. Acts as a genome stabilization factor that prevents flaps from equilibrating into structures that lead to duplications and deletions. Also possesses 5'-3' exonuclease activity on nicked or gapped double-stranded DNA, and exhibits RNase H activity. Also involved in replication and repair of rDNA and in repairing mitochondrial DNA. The sequence is that of Flap endonuclease 1 from Arthroderma otae (strain ATCC MYA-4605 / CBS 113480) (Microsporum canis).